A 561-amino-acid polypeptide reads, in one-letter code: GPI mannosyltransferase 3 (561 aa).

Transmembrane regions (helical) follow at residues 3-25, 64-84, 110-130, 155-175, 195-215, 246-266, 275-295, and 328-348; these read LIYVFLLILAVRLASVFVVQTYY, IAGLYKILALLQLDSAHLLVV, WALFLILVPWFWFYTGSRTLA, LWPAAICCFLRPTAAVIWLPL, FVLIGLLVAGLGIAIDTYWHG, FSVGLPTVLGINTLPFIFGVM, YPVSKQLLITIFLTLVVLSAV, and TMLWTTALVILVGNVMPAWYL. Residues Asn-398 and Asn-456 are each glycosylated (N-linked (GlcNAc...) asparagine). The interval 525 to 546 is disordered; it reads ENAFNRGPDSGQHEPDVHDHPP. A compositionally biased stretch (basic and acidic residues) spans 535 to 546; that stretch reads GQHEPDVHDHPP.

The protein belongs to the glycosyltransferase 22 family. PIGB subfamily.

It localises to the endoplasmic reticulum membrane. The protein operates within glycolipid biosynthesis; glycosylphosphatidylinositol-anchor biosynthesis. Functionally, mannosyltransferase involved in glycosylphosphatidylinositol-anchor biosynthesis. Transfers the third alpha-1,2-mannose to Man2-GlcN-acyl-PI during GPI precursor assembly. This chain is GPI mannosyltransferase 3, found in Drosophila melanogaster (Fruit fly).